Consider the following 334-residue polypeptide: uncharacterized protein (334 aa).

The next 2 membrane-spanning stretches (helical) occupy residues 19-39 and 55-75; these read AFLR…SFGI and LIVL…AALF. Positions 308–334 are disordered; the sequence is KPESKSSSQKSVETEIEKEVKDKLAKN. Residues 319–334 show a composition bias toward basic and acidic residues; it reads VETEIEKEVKDKLAKN.

Its subcellular location is the cell membrane. This is an uncharacterized protein from Mycoplasma genitalium (strain ATCC 33530 / DSM 19775 / NCTC 10195 / G37) (Mycoplasmoides genitalium).